The primary structure comprises 316 residues: D-alanine--D-alanine ligase (316 aa).

The ATP-grasp domain maps to 112 to 310 (KTALKAHGLP…FGKLCRWLVE (199 aa)). 139 to 189 (MATPYVVKPNNEGSSVGVYLVNEAANGPPHLSDDMPDEVMVETYAPGRELT) provides a ligand contact to ATP. Residues aspartate 261, glutamate 277, and asparagine 279 each contribute to the Mg(2+) site.

This sequence belongs to the D-alanine--D-alanine ligase family. Mg(2+) is required as a cofactor. Mn(2+) serves as cofactor.

The protein localises to the cytoplasm. It carries out the reaction 2 D-alanine + ATP = D-alanyl-D-alanine + ADP + phosphate + H(+). It functions in the pathway cell wall biogenesis; peptidoglycan biosynthesis. Functionally, cell wall formation. This chain is D-alanine--D-alanine ligase, found in Jannaschia sp. (strain CCS1).